The chain runs to 200 residues: Insulin, isoform 2 (200 aa).

A disordered region spans residues 148–200; that stretch reads EVDSSPQPQGSESLPAQPPAQPAPQPEPQQAREPSPEVSCCGLWPRRPQRSQN. A compositionally biased stretch (pro residues) spans 163–174; sequence AQPPAQPAPQPE. Low complexity predominate over residues 175–184; the sequence is PQQAREPSPE.

Expressed in pancreas, eye and, to a lower extent, in limb.

This is Insulin, isoform 2 (INS-IGF2) from Homo sapiens (Human).